Consider the following 206-residue polypeptide: Probable GTP-binding protein EngB (206 aa).

The EngB-type G domain maps to 25-198 (SRAEVAFAGR…AVRIEGWLAP (174 aa)). Mg(2+)-binding residues include serine 40 and threonine 62.

Belongs to the TRAFAC class TrmE-Era-EngA-EngB-Septin-like GTPase superfamily. EngB GTPase family. It depends on Mg(2+) as a cofactor.

Necessary for normal cell division and for the maintenance of normal septation. This chain is Probable GTP-binding protein EngB, found in Thiobacillus denitrificans (strain ATCC 25259 / T1).